The following is a 248-amino-acid chain: tRNA pseudouridine synthase A (248 aa).

The Nucleophile role is filled by Asp55. Residue Tyr114 coordinates substrate.

The protein belongs to the tRNA pseudouridine synthase TruA family. Homodimer.

It carries out the reaction uridine(38/39/40) in tRNA = pseudouridine(38/39/40) in tRNA. Its function is as follows. Formation of pseudouridine at positions 38, 39 and 40 in the anticodon stem and loop of transfer RNAs. In Rhodopseudomonas palustris (strain ATCC BAA-98 / CGA009), this protein is tRNA pseudouridine synthase A.